Here is a 1064-residue protein sequence, read N- to C-terminus: Carbamoyl phosphate synthase pyrimidine-specific large chain (1064 aa).

The tract at residues 1-401 is carboxyphosphate synthetic domain; the sequence is MPKRRDIETI…SLLKAVRSLE (401 aa). ATP is bound by residues Arg129, Arg169, Gly175, Gly176, Arg208, Ile210, Gly241, Ile242, His243, Gln284, and Glu298. In terms of domain architecture, ATP-grasp 1 spans 133-327; the sequence is RALMNELGEP…IAKLAAKIAV (195 aa). Mg(2+)-binding residues include Gln284, Glu298, and Asn300. Mn(2+)-binding residues include Gln284, Glu298, and Asn300. Positions 402–546 are oligomerization domain; it reads IGVHHLELNE…YSTYEEENES (145 aa). The carbamoyl phosphate synthetic domain stretch occupies residues 547–929; sequence IVTEKPSVIV…ALYKGLVASG (383 aa). The ATP-grasp 2 domain maps to 671–861; that stretch reads EQALSELGIP…MANLATKAIL (191 aa). ATP contacts are provided by Arg707, Arg746, Ile748, Glu752, Gly777, Val778, His779, Ser780, Gln820, and Glu832. Mg(2+)-binding residues include Gln820, Glu832, and Asn834. Mn(2+) contacts are provided by Gln820, Glu832, and Asn834. One can recognise an MGS-like domain in the interval 930–1064; the sequence is IQIQPHGAVL…TAMTEGLVRS (135 aa). The tract at residues 930–1064 is allosteric domain; that stretch reads IQIQPHGAVL…TAMTEGLVRS (135 aa).

It belongs to the CarB family. As to quaternary structure, composed of two chains; the small (or glutamine) chain promotes the hydrolysis of glutamine to ammonia, which is used by the large (or ammonia) chain to synthesize carbamoyl phosphate. Tetramer of heterodimers (alpha,beta)4. Mg(2+) is required as a cofactor. It depends on Mn(2+) as a cofactor.

The enzyme catalyses hydrogencarbonate + L-glutamine + 2 ATP + H2O = carbamoyl phosphate + L-glutamate + 2 ADP + phosphate + 2 H(+). The catalysed reaction is hydrogencarbonate + NH4(+) + 2 ATP = carbamoyl phosphate + 2 ADP + phosphate + 2 H(+). It functions in the pathway amino-acid biosynthesis; L-arginine biosynthesis; carbamoyl phosphate from bicarbonate: step 1/1. Its pathway is pyrimidine metabolism; UMP biosynthesis via de novo pathway; (S)-dihydroorotate from bicarbonate: step 1/3. Functionally, small subunit of the glutamine-dependent carbamoyl phosphate synthetase (CPSase). CPSase catalyzes the formation of carbamoyl phosphate from the ammonia moiety of glutamine, carbonate, and phosphate donated by ATP, constituting the first step of the biosynthetic pathway leading to pyrimidine nucleotides. The large subunit (synthetase) binds the substrates ammonia (free or transferred from glutamine from the small subunit), hydrogencarbonate and ATP and carries out an ATP-coupled ligase reaction, activating hydrogencarbonate by forming carboxy phosphate which reacts with ammonia to form carbamoyl phosphate. The polypeptide is Carbamoyl phosphate synthase pyrimidine-specific large chain (pyrAB) (Geobacillus stearothermophilus (Bacillus stearothermophilus)).